The sequence spans 349 residues: Uroporphyrinogen decarboxylase (349 aa).

Residues 23-27 (RQAGR), aspartate 71, tyrosine 148, serine 203, and histidine 317 contribute to the substrate site.

The protein belongs to the uroporphyrinogen decarboxylase family. Homodimer.

Its subcellular location is the cytoplasm. It catalyses the reaction uroporphyrinogen III + 4 H(+) = coproporphyrinogen III + 4 CO2. The protein operates within porphyrin-containing compound metabolism; protoporphyrin-IX biosynthesis; coproporphyrinogen-III from 5-aminolevulinate: step 4/4. Its function is as follows. Catalyzes the decarboxylation of four acetate groups of uroporphyrinogen-III to yield coproporphyrinogen-III. This chain is Uroporphyrinogen decarboxylase, found in Sorangium cellulosum (strain So ce56) (Polyangium cellulosum (strain So ce56)).